Consider the following 195-residue polypeptide: Probable cobalt-precorrin-6B C(15)-methyltransferase (decarboxylating) (195 aa).

S-adenosyl-L-methionine is bound by residues threonine 24, 48–52 (GCGTG), aspartate 72, and alanine 101.

The protein belongs to the methyltransferase superfamily. Archaeal-type CbiT family.

The enzyme catalyses Co-precorrin-6B + S-adenosyl-L-methionine = Co-precorrin-7 + S-adenosyl-L-homocysteine + CO2. Its pathway is cofactor biosynthesis; adenosylcobalamin biosynthesis; cob(II)yrinate a,c-diamide from sirohydrochlorin (anaerobic route): step 8/10. In terms of biological role, catalyzes the methylation of C-15 in cobalt-precorrin-6B followed by the decarboxylation of C-12 to form cobalt-precorrin-7. The protein is Probable cobalt-precorrin-6B C(15)-methyltransferase (decarboxylating) of Pyrobaculum calidifontis (strain DSM 21063 / JCM 11548 / VA1).